The following is a 92-amino-acid chain: Conotoxin Im9.4 (92 aa).

A signal peptide spans 1–20 (MHRSLAGSAVLMLLLLFALG). Positions 21–62 (NFVGVQPGLVTRDADNGQLMDNRRNLRLERKTMSLFKSLDKR) are excised as a propeptide. 3 cysteine pairs are disulfide-bonded: cysteine 65–cysteine 79, cysteine 69–cysteine 81, and cysteine 75–cysteine 87. The residue at position 90 (asparagine 90) is an Asparagine amide.

Belongs to the conotoxin P superfamily. In terms of tissue distribution, expressed by the venom duct.

It is found in the secreted. Functionally, probable neurotoxin that inhibits ion channels. In Conus imperialis (Imperial cone), this protein is Conotoxin Im9.4.